A 115-amino-acid chain; its full sequence is Tyrosine-protein phosphatase 23 (115 aa).

The Tyrosine-protein phosphatase domain occupies 1–115 (WMMIVEQKCR…EIGGDAPMVV (115 aa)). D83 lines the substrate pocket.

It belongs to the protein-tyrosine phosphatase family.

The enzyme catalyses O-phospho-L-tyrosyl-[protein] + H2O = L-tyrosyl-[protein] + phosphate. The sequence is that of Tyrosine-protein phosphatase 23 (STY-23) from Styela plicata (Wrinkled sea squirt).